The following is a 338-amino-acid chain: Aspartate-semialdehyde dehydrogenase (338 aa).

NADP(+) is bound by residues 13–16 (TGNV) and 41–42 (SS). Position 101 (Arg101) interacts with phosphate. Cys132 serves as the catalytic Acyl-thioester intermediate. Residue Gln159 participates in substrate binding. NADP(+)-binding positions include 162 to 163 (SG) and Pro187. Residue Lys216 participates in phosphate binding. Arg237 is a substrate binding site. His244 functions as the Proton acceptor in the catalytic mechanism. Asn317 contributes to the NADP(+) binding site.

The protein belongs to the aspartate-semialdehyde dehydrogenase family. As to quaternary structure, homodimer.

It carries out the reaction L-aspartate 4-semialdehyde + phosphate + NADP(+) = 4-phospho-L-aspartate + NADPH + H(+). It participates in amino-acid biosynthesis; L-lysine biosynthesis via DAP pathway; (S)-tetrahydrodipicolinate from L-aspartate: step 2/4. The protein operates within amino-acid biosynthesis; L-methionine biosynthesis via de novo pathway; L-homoserine from L-aspartate: step 2/3. Its pathway is amino-acid biosynthesis; L-threonine biosynthesis; L-threonine from L-aspartate: step 2/5. In terms of biological role, catalyzes the NADPH-dependent formation of L-aspartate-semialdehyde (L-ASA) by the reductive dephosphorylation of L-aspartyl-4-phosphate. The protein is Aspartate-semialdehyde dehydrogenase of Rickettsia conorii (strain ATCC VR-613 / Malish 7).